The following is a 135-amino-acid chain: MATFHFDLVSPEKIAFSGEVDQVDVPGQEGDFGVLAGHAPFVATLRPGILTVTTGGTQQKIIVLGGLAEISEKGLTILADVATSLKELDQTAFATEISGMEAKLNEKQGDELDRAIERLDHFKTIQQQLNTTALH.

This sequence belongs to the ATPase epsilon chain family. In terms of assembly, F-type ATPases have 2 components, CF(1) - the catalytic core - and CF(0) - the membrane proton channel. CF(1) has five subunits: alpha(3), beta(3), gamma(1), delta(1), epsilon(1). CF(0) has three main subunits: a, b and c.

The protein localises to the cell inner membrane. In terms of biological role, produces ATP from ADP in the presence of a proton gradient across the membrane. The sequence is that of ATP synthase epsilon chain from Bradyrhizobium sp. (strain ORS 278).